Here is a 388-residue protein sequence, read N- to C-terminus: tRNA (guanine(26)-N(2))-dimethyltransferase (388 aa).

The 380-residue stretch at 4 to 383 (KTIVEGTTKV…APITEIKEII (380 aa)) folds into the Trm1 methyltransferase domain. Positions 41, 78, 94, and 123 each coordinate S-adenosyl-L-methionine. Cysteine 251, cysteine 254, cysteine 271, and cysteine 274 together coordinate Zn(2+).

The protein belongs to the class I-like SAM-binding methyltransferase superfamily. Trm1 family.

It catalyses the reaction guanosine(26) in tRNA + 2 S-adenosyl-L-methionine = N(2)-dimethylguanosine(26) in tRNA + 2 S-adenosyl-L-homocysteine + 2 H(+). In terms of biological role, dimethylates a single guanine residue at position 26 of a number of tRNAs using S-adenosyl-L-methionine as donor of the methyl groups. This Methanosarcina barkeri (strain Fusaro / DSM 804) protein is tRNA (guanine(26)-N(2))-dimethyltransferase.